We begin with the raw amino-acid sequence, 248 residues long: 5'-nucleotidase SurE (248 aa).

A divalent metal cation contacts are provided by D8, D9, S39, and N91.

Belongs to the SurE nucleotidase family. The cofactor is a divalent metal cation.

The protein localises to the cytoplasm. The enzyme catalyses a ribonucleoside 5'-phosphate + H2O = a ribonucleoside + phosphate. Functionally, nucleotidase that shows phosphatase activity on nucleoside 5'-monophosphates. This chain is 5'-nucleotidase SurE, found in Neisseria meningitidis serogroup C / serotype 2a (strain ATCC 700532 / DSM 15464 / FAM18).